Consider the following 352-residue polypeptide: Decapping nuclease din1 (352 aa).

Residues Arg-33 and 93–95 each bind substrate; that span reads WRG. Glu-150 is an a divalent metal cation binding site. Cys-182 and Glu-199 together coordinate substrate. Asp-201 contributes to the a divalent metal cation binding site. Ser-218 carries the post-translational modification Phosphoserine. Residues Glu-239 and Leu-240 each contribute to the a divalent metal cation site. Substrate-binding residues include Lys-241 and Gln-263.

This sequence belongs to the DXO/Dom3Z family. Interacts with dhp1/Rat1; the interaction is direct, stabilizes dhp1 protein structure and stimulates its exoribonuclease activity. The interaction also stimulates din1 pyrophosphohydrolase activity, probably by recruiting it to mRNA substrates. It depends on a divalent metal cation as a cofactor.

The protein resides in the nucleus. It catalyses the reaction a 5'-end NAD(+)-phospho-ribonucleoside in mRNA + H2O = a 5'-end phospho-ribonucleoside in mRNA + NAD(+) + H(+). The catalysed reaction is a 5'-end (N(7)-methyl 5'-triphosphoguanosine)-ribonucleoside-ribonucleotide in mRNA + H2O = a (N(7)-methyl 5'-triphosphoguanosine)-nucleoside + a 5'-end phospho-ribonucleoside in mRNA + H(+). It carries out the reaction a 5'-end triphospho-ribonucleoside in mRNA + H2O = a 5'-end phospho-ribonucleoside in mRNA + diphosphate + H(+). Functionally, decapping enzyme for NAD-capped RNAs: specifically hydrolyzes the nicotinamide adenine dinucleotide (NAD) cap from a subset of RNAs by removing the entire NAD moiety from the 5'-end of an NAD-capped RNA. The NAD-cap is present at the 5'-end of some RNAs and snoRNAs. In contrast to the canonical 5'-end N7 methylguanosine (m7G) cap, the NAD cap promotes mRNA decay. Also acts as a non-canonical decapping enzyme that removes the entire cap structure of m7G capped or incompletely capped RNAs and mediates their subsequent degradation. Specifically degrades pre-mRNAs with a defective m7G cap and is part of a pre-mRNA capping quality control. Has decapping activity toward incomplete 5'-end m7G cap mRNAs such as unmethylated 5'-end-capped RNA (cap0), while it has no activity toward 2'-O-ribose methylated m7G cap (cap1). Also possesses RNA 5'-pyrophosphohydrolase activity by hydrolyzing the 5'-end triphosphate to release pyrophosphates. Stimulates exoribonuclease activity of dhp1, allowing it to degrade RNAs with stable secondary structure more effectively. The protein is Decapping nuclease din1 of Schizosaccharomyces pombe (strain 972 / ATCC 24843) (Fission yeast).